A 367-amino-acid polypeptide reads, in one-letter code: Glutamate 5-kinase (367 aa).

Lys-10 provides a ligand contact to ATP. The substrate site is built by Ser-50, Asp-137, and Asn-149. Residues Thr-169 to Asp-170 and Thr-211 to Lys-217 contribute to the ATP site. Residues Ala-275–Glu-353 form the PUA domain.

This sequence belongs to the glutamate 5-kinase family.

The protein resides in the cytoplasm. The enzyme catalyses L-glutamate + ATP = L-glutamyl 5-phosphate + ADP. It functions in the pathway amino-acid biosynthesis; L-proline biosynthesis; L-glutamate 5-semialdehyde from L-glutamate: step 1/2. Functionally, catalyzes the transfer of a phosphate group to glutamate to form L-glutamate 5-phosphate. The protein is Glutamate 5-kinase of Sodalis glossinidius (strain morsitans).